The primary structure comprises 262 residues: Ribose-5-phosphate isomerase A (262 aa).

Substrate-binding positions include T33–T36, D89–D92, and K102–G105. E111 acts as the Proton acceptor in catalysis. K129 serves as a coordination point for substrate.

This sequence belongs to the ribose 5-phosphate isomerase family. In terms of assembly, homodimer.

It carries out the reaction aldehydo-D-ribose 5-phosphate = D-ribulose 5-phosphate. It participates in carbohydrate degradation; pentose phosphate pathway; D-ribose 5-phosphate from D-ribulose 5-phosphate (non-oxidative stage): step 1/1. Its function is as follows. Catalyzes the reversible conversion of ribose-5-phosphate to ribulose 5-phosphate. This is Ribose-5-phosphate isomerase A from Roseobacter denitrificans (strain ATCC 33942 / OCh 114) (Erythrobacter sp. (strain OCh 114)).